A 112-amino-acid polypeptide reads, in one-letter code: Large ribosomal subunit protein uL24 (112 aa).

The protein belongs to the universal ribosomal protein uL24 family. Part of the 50S ribosomal subunit.

Functionally, one of two assembly initiator proteins, it binds directly to the 5'-end of the 23S rRNA, where it nucleates assembly of the 50S subunit. Its function is as follows. One of the proteins that surrounds the polypeptide exit tunnel on the outside of the subunit. The protein is Large ribosomal subunit protein uL24 of Desulfitobacterium hafniense (strain Y51).